A 355-amino-acid polypeptide reads, in one-letter code: UDP-3-O-acylglucosamine N-acyltransferase (355 aa).

H258 functions as the Proton acceptor in the catalytic mechanism.

The protein belongs to the transferase hexapeptide repeat family. LpxD subfamily. As to quaternary structure, homotrimer.

The catalysed reaction is a UDP-3-O-[(3R)-3-hydroxyacyl]-alpha-D-glucosamine + a (3R)-hydroxyacyl-[ACP] = a UDP-2-N,3-O-bis[(3R)-3-hydroxyacyl]-alpha-D-glucosamine + holo-[ACP] + H(+). It functions in the pathway bacterial outer membrane biogenesis; LPS lipid A biosynthesis. In terms of biological role, catalyzes the N-acylation of UDP-3-O-acylglucosamine using 3-hydroxyacyl-ACP as the acyl donor. Is involved in the biosynthesis of lipid A, a phosphorylated glycolipid that anchors the lipopolysaccharide to the outer membrane of the cell. The polypeptide is UDP-3-O-acylglucosamine N-acyltransferase (Bradyrhizobium diazoefficiens (strain JCM 10833 / BCRC 13528 / IAM 13628 / NBRC 14792 / USDA 110)).